Reading from the N-terminus, the 249-residue chain is MKFYKYCASGNDFVITNADRKEDRSALAKELCNRYEGIGADGFIVILPHEKYDFEWEFYNNDGSRAAMCGNGSRAAAHFVHHINKINPNMSFLTGAGVIKAKVNQDKVEVSLGKIKSVQNTFEELGKTWQLCNTGVPHLVHFCQNLDEFDTMLCQKMRQKYNANVNFVKILDENHLKVRTYERGVEDETLACGTGMGACFYLAFLNKKVQNKVKITPKSGEEVGFAYKNEELFFEGKVKYCFEANYNFS.

Substrate contacts are provided by Asn-11 and Asn-60. Cys-69 acts as the Proton donor in catalysis. Residues 70–71 (GN), Asn-164, and 182–183 (ER) contribute to the substrate site. The Proton acceptor role is filled by Cys-192. Substrate is bound at residue 193–194 (GT).

Belongs to the diaminopimelate epimerase family. As to quaternary structure, homodimer.

It is found in the cytoplasm. It carries out the reaction (2S,6S)-2,6-diaminopimelate = meso-2,6-diaminopimelate. The protein operates within amino-acid biosynthesis; L-lysine biosynthesis via DAP pathway; DL-2,6-diaminopimelate from LL-2,6-diaminopimelate: step 1/1. Catalyzes the stereoinversion of LL-2,6-diaminopimelate (L,L-DAP) to meso-diaminopimelate (meso-DAP), a precursor of L-lysine and an essential component of the bacterial peptidoglycan. The protein is Diaminopimelate epimerase of Campylobacter jejuni subsp. jejuni serotype O:6 (strain 81116 / NCTC 11828).